The sequence spans 274 residues: ATP synthase subunit a (274 aa).

Transmembrane regions (helical) follow at residues 40–60 (FWVCNFDSIFLSIFLGLVILI), 110–130 (IFVWIFLMNLMDLIPIDLVPF), 149–169 (DVNITISMSLVVFLLIIFYSI), 224–244 (IFILISGLLPWWLQWILSVPW), and 245–265 (AIFHILIISLQSFIFMVLTIV).

The protein belongs to the ATPase A chain family. F-type ATPases have 2 components, CF(1) - the catalytic core - and CF(0) - the membrane proton channel. CF(1) has five subunits: alpha(3), beta(3), gamma(1), delta(1), epsilon(1). CF(0) has three main subunits: a(1), b(2) and c(9-12). The alpha and beta chains form an alternating ring which encloses part of the gamma chain. CF(1) is attached to CF(0) by a central stalk formed by the gamma and epsilon chains, while a peripheral stalk is formed by the delta and b chains.

The protein resides in the cell membrane. Functionally, key component of the proton channel; it plays a direct role in the translocation of protons across the membrane. The chain is ATP synthase subunit a from Buchnera aphidicola subsp. Baizongia pistaciae (strain Bp).